The following is a 237-amino-acid chain: MRPSKRAANELRPLSFTTQFTRYAEGSVLVTLGNTKVICNASIVEGVPRFLKNSEQGWLTAEYGMLPRSTHSRMDREASRGKQGGRTVEIQRLIGRSLRAALDLKLLGPYTITIDCDVIQADGGTRTAAINGSCIAMIEALRHLQRKGILQTDPLKHKVAAVSVGIYKGVPVLDLDYAEDSNAHTDMNVVMTDNDAFIEIQGTAEGDAFHAKELDALINLARHGIKQIIEKQQEALS.

Residues R86 and 124–126 (GTR) contribute to the phosphate site.

This sequence belongs to the RNase PH family. Homohexameric ring arranged as a trimer of dimers.

It carries out the reaction tRNA(n+1) + phosphate = tRNA(n) + a ribonucleoside 5'-diphosphate. In terms of biological role, phosphorolytic 3'-5' exoribonuclease that plays an important role in tRNA 3'-end maturation. Removes nucleotide residues following the 3'-CCA terminus of tRNAs; can also add nucleotides to the ends of RNA molecules by using nucleoside diphosphates as substrates, but this may not be physiologically important. Probably plays a role in initiation of 16S rRNA degradation (leading to ribosome degradation) during starvation. This chain is Ribonuclease PH, found in Coxiella burnetii (strain RSA 331 / Henzerling II).